The chain runs to 33 residues: Cytochrome b6-f complex subunit 8 (33 aa).

Residues 2 to 22 (LFTLAWASLAAVFSFSIAMVV) traverse the membrane as a helical segment.

Belongs to the PetN family. As to quaternary structure, the 4 large subunits of the cytochrome b6-f complex are cytochrome b6, subunit IV (17 kDa polypeptide, PetD), cytochrome f and the Rieske protein, while the 4 small subunits are PetG, PetL, PetM and PetN. The complex functions as a dimer.

The protein localises to the cellular thylakoid membrane. Component of the cytochrome b6-f complex, which mediates electron transfer between photosystem II (PSII) and photosystem I (PSI), cyclic electron flow around PSI, and state transitions. The protein is Cytochrome b6-f complex subunit 8 of Synechococcus sp. (strain WH7803).